Reading from the N-terminus, the 229-residue chain is UPF0488 protein C8orf33 (229 aa).

Residues 1–16 (MAALGHLAGEAAAAPG) are compositionally biased toward low complexity. The segment at 1–96 (MAALGHLAGE…GEKASEKLAP (96 aa)) is disordered. Residue alanine 2 is modified to N-acetylalanine. Arginine 27 is modified (omega-N-methylarginine). The span at 69 to 79 (KKQKNKKKTRN) shows a compositional bias: basic residues. Residue serine 82 is modified to Phosphoserine.

The protein belongs to the UPF0488 family.

This is UPF0488 protein C8orf33 (C8orf33) from Homo sapiens (Human).